Consider the following 1035-residue polypeptide: Glycine dehydrogenase (decarboxylating), mitochondrial (1035 aa).

The transit peptide at 1–64 (MERARKLANR…KSFNTQQARS (64 aa)) directs the protein to the mitochondrion. Lys-771 carries the N6-(pyridoxal phosphate)lysine modification.

The protein belongs to the GcvP family. In terms of assembly, homodimer. The glycine cleavage system is composed of four proteins: P, T, L and H. Requires pyridoxal 5'-phosphate as cofactor.

It is found in the mitochondrion. It catalyses the reaction N(6)-[(R)-lipoyl]-L-lysyl-[glycine-cleavage complex H protein] + glycine + H(+) = N(6)-[(R)-S(8)-aminomethyldihydrolipoyl]-L-lysyl-[glycine-cleavage complex H protein] + CO2. Functionally, the glycine cleavage system catalyzes the degradation of glycine. The P protein binds the alpha-amino group of glycine through its pyridoxal phosphate cofactor; CO(2) is released and the remaining methylamine moiety is then transferred to the lipoamide cofactor of the H protein. This is Glycine dehydrogenase (decarboxylating), mitochondrial (GDCSP) from Solanum tuberosum (Potato).